The primary structure comprises 155 residues: Ribosome maturation factor RimP (155 aa).

It belongs to the RimP family.

It is found in the cytoplasm. In terms of biological role, required for maturation of 30S ribosomal subunits. This Prochlorococcus marinus (strain MIT 9312) protein is Ribosome maturation factor RimP.